A 157-amino-acid polypeptide reads, in one-letter code: 2-C-methyl-D-erythritol 2,4-cyclodiphosphate synthase (157 aa).

Asp8 and His10 together coordinate a divalent metal cation. 4-CDP-2-C-methyl-D-erythritol 2-phosphate is bound by residues 8–10 (DVH) and 34–35 (HS). An a divalent metal cation-binding site is contributed by His42. 4-CDP-2-C-methyl-D-erythritol 2-phosphate contacts are provided by residues 56–58 (DIG), 61–65 (FPDTD), 100–106 (AQAPKMA), 132–135 (TTTE), Phe139, and Arg142.

It belongs to the IspF family. Homotrimer. The cofactor is a divalent metal cation.

It catalyses the reaction 4-CDP-2-C-methyl-D-erythritol 2-phosphate = 2-C-methyl-D-erythritol 2,4-cyclic diphosphate + CMP. It functions in the pathway isoprenoid biosynthesis; isopentenyl diphosphate biosynthesis via DXP pathway; isopentenyl diphosphate from 1-deoxy-D-xylulose 5-phosphate: step 4/6. Involved in the biosynthesis of isopentenyl diphosphate (IPP) and dimethylallyl diphosphate (DMAPP), two major building blocks of isoprenoid compounds. Catalyzes the conversion of 4-diphosphocytidyl-2-C-methyl-D-erythritol 2-phosphate (CDP-ME2P) to 2-C-methyl-D-erythritol 2,4-cyclodiphosphate (ME-CPP) with a corresponding release of cytidine 5-monophosphate (CMP). The chain is 2-C-methyl-D-erythritol 2,4-cyclodiphosphate synthase from Pseudomonas syringae pv. tomato (strain ATCC BAA-871 / DC3000).